Here is a 149-residue protein sequence, read N- to C-terminus: Large ribosomal subunit protein bL9 (149 aa).

It belongs to the bacterial ribosomal protein bL9 family.

In terms of biological role, binds to the 23S rRNA. The protein is Large ribosomal subunit protein bL9 of Anaeromyxobacter dehalogenans (strain 2CP-1 / ATCC BAA-258).